Consider the following 385-residue polypeptide: UPF0284 protein P9301_04631 (385 aa).

The protein belongs to the UPF0284 family.

This Prochlorococcus marinus (strain MIT 9301) protein is UPF0284 protein P9301_04631.